A 78-amino-acid chain; its full sequence is Large ribosomal subunit protein bL28 (78 aa).

The span at 1-20 (MSRVCQLTGTRANNGMSVSH) shows a compositional bias: polar residues. The segment at 1-23 (MSRVCQLTGTRANNGMSVSHSHI) is disordered.

Belongs to the bacterial ribosomal protein bL28 family.

The sequence is that of Large ribosomal subunit protein bL28 from Prochlorococcus marinus (strain NATL2A).